A 485-amino-acid polypeptide reads, in one-letter code: UDP-N-acetylmuramate--L-alanine ligase (485 aa).

129 to 135 (GTHGKTT) contributes to the ATP binding site.

Belongs to the MurCDEF family.

The protein localises to the cytoplasm. It catalyses the reaction UDP-N-acetyl-alpha-D-muramate + L-alanine + ATP = UDP-N-acetyl-alpha-D-muramoyl-L-alanine + ADP + phosphate + H(+). Its pathway is cell wall biogenesis; peptidoglycan biosynthesis. Cell wall formation. This chain is UDP-N-acetylmuramate--L-alanine ligase, found in Vibrio parahaemolyticus serotype O3:K6 (strain RIMD 2210633).